A 332-amino-acid polypeptide reads, in one-letter code: 2,3-diketo-L-gulonate reductase (332 aa).

The active-site Proton donor is His-44. NAD(+) is bound by residues 168–174 (ITMVDMS), 224–225 (WK), and 304–306 (GHE).

This sequence belongs to the LDH2/MDH2 oxidoreductase family. DlgD subfamily. Homodimer.

The protein localises to the cytoplasm. The enzyme catalyses 3-dehydro-L-gulonate + NAD(+) = 2,3-dioxo-L-gulonate + NADH + H(+). It carries out the reaction 3-dehydro-L-gulonate + NADP(+) = 2,3-dioxo-L-gulonate + NADPH + H(+). Catalyzes the reduction of 2,3-diketo-L-gulonate in the presence of NADH, to form 3-keto-L-gulonate. The sequence is that of 2,3-diketo-L-gulonate reductase from Salmonella heidelberg (strain SL476).